Here is a 177-residue protein sequence, read N- to C-terminus: ATP-dependent protease subunit HslV (177 aa).

Threonine 2 is an active-site residue. Glycine 157, cysteine 160, and threonine 163 together coordinate Na(+).

It belongs to the peptidase T1B family. HslV subfamily. In terms of assembly, a double ring-shaped homohexamer of HslV is capped on each side by a ring-shaped HslU homohexamer. The assembly of the HslU/HslV complex is dependent on binding of ATP.

It is found in the cytoplasm. It carries out the reaction ATP-dependent cleavage of peptide bonds with broad specificity.. Its activity is regulated as follows. Allosterically activated by HslU binding. In terms of biological role, protease subunit of a proteasome-like degradation complex believed to be a general protein degrading machinery. This Aeromonas hydrophila subsp. hydrophila (strain ATCC 7966 / DSM 30187 / BCRC 13018 / CCUG 14551 / JCM 1027 / KCTC 2358 / NCIMB 9240 / NCTC 8049) protein is ATP-dependent protease subunit HslV.